The chain runs to 141 residues: MNQFEAYSLLFVDSFVSNLIISFQNELIFHSMQMLVGYNRLIMLLVAICSSLSGNTVNYLFGKIVLNIFYASKNEQNILRHKNLTKLYYQYETFIIFLISFPFWGCFVSLFSGFFKTKFLKFLSIGCLAKACYYASKIYIF.

2 consecutive transmembrane segments (helical) span residues leucine 41–phenylalanine 61 and isoleucine 95–phenylalanine 115.

The protein localises to the cell membrane. This is an uncharacterized protein from Rickettsia prowazekii (strain Madrid E).